The primary structure comprises 273 residues: 2,3,4,5-tetrahydropyridine-2,6-dicarboxylate N-succinyltransferase (273 aa).

Arg104 and Asp141 together coordinate substrate.

The protein belongs to the transferase hexapeptide repeat family. Homotrimer.

It localises to the cytoplasm. It carries out the reaction (S)-2,3,4,5-tetrahydrodipicolinate + succinyl-CoA + H2O = (S)-2-succinylamino-6-oxoheptanedioate + CoA. It participates in amino-acid biosynthesis; L-lysine biosynthesis via DAP pathway; LL-2,6-diaminopimelate from (S)-tetrahydrodipicolinate (succinylase route): step 1/3. The sequence is that of 2,3,4,5-tetrahydropyridine-2,6-dicarboxylate N-succinyltransferase from Laribacter hongkongensis (strain HLHK9).